Consider the following 751-residue polypeptide: Photosystem I P700 chlorophyll a apoprotein A1 (751 aa).

Helical transmembrane passes span Val71–Ala94, Leu157–His180, Leu196–Leu220, Ile292–Tyr310, Trp347–Tyr370, Leu386–Val412, Ala434–His456, and Phe532–Leu550. The [4Fe-4S] cluster site is built by Cys574 and Cys583. Helical transmembrane passes span His590 to Trp611 and Leu665 to Phe687. Residue His676 participates in chlorophyll a' binding. Positions 684 and 692 each coordinate chlorophyll a. Trp693 contributes to the phylloquinone binding site. The helical transmembrane segment at Ala725–Ala745 threads the bilayer.

It belongs to the PsaA/PsaB family. The PsaA/B heterodimer binds the P700 chlorophyll special pair and subsequent electron acceptors. PSI consists of a core antenna complex that captures photons, and an electron transfer chain that converts photonic excitation into a charge separation. The eukaryotic PSI reaction center is composed of at least 11 subunits. P700 is a chlorophyll a/chlorophyll a' dimer, A0 is one or more chlorophyll a, A1 is one or both phylloquinones and FX is a shared 4Fe-4S iron-sulfur center. serves as cofactor.

It localises to the plastid. The protein localises to the chloroplast thylakoid membrane. The enzyme catalyses reduced [plastocyanin] + hnu + oxidized [2Fe-2S]-[ferredoxin] = oxidized [plastocyanin] + reduced [2Fe-2S]-[ferredoxin]. PsaA and PsaB bind P700, the primary electron donor of photosystem I (PSI), as well as the electron acceptors A0, A1 and FX. PSI is a plastocyanin-ferredoxin oxidoreductase, converting photonic excitation into a charge separation, which transfers an electron from the donor P700 chlorophyll pair to the spectroscopically characterized acceptors A0, A1, FX, FA and FB in turn. Oxidized P700 is reduced on the lumenal side of the thylakoid membrane by plastocyanin. The protein is Photosystem I P700 chlorophyll a apoprotein A1 of Zea mays (Maize).